A 269-amino-acid polypeptide reads, in one-letter code: Phosphonates import ATP-binding protein PhnC (269 aa).

An ABC transporter domain is found at 2–245 (LVVEGLTCRF…VARELYDLEA (244 aa)). 34 to 41 (GRSGAGKS) serves as a coordination point for ATP.

Belongs to the ABC transporter superfamily. Phosphonates importer (TC 3.A.1.9.1) family. In terms of assembly, the complex is composed of two ATP-binding proteins (PhnC), two transmembrane proteins (PhnE) and a solute-binding protein (PhnD).

The protein resides in the cell inner membrane. It carries out the reaction phosphonate(out) + ATP + H2O = phosphonate(in) + ADP + phosphate + H(+). In terms of biological role, part of the ABC transporter complex PhnCDE involved in phosphonates import. Responsible for energy coupling to the transport system. This chain is Phosphonates import ATP-binding protein PhnC, found in Bradyrhizobium diazoefficiens (strain JCM 10833 / BCRC 13528 / IAM 13628 / NBRC 14792 / USDA 110).